The following is a 492-amino-acid chain: MPMTFVFITVGFSITIFFSLVSIITLVAFICSVFIPILSIFFRSEGFIFAITCFIEEEVNLIVCGYDISQMNYFLKILGGGREVGRSAIEVGNSDGSIILDYGVNFDEKDNPNFPLQEMPGKVKGFVVSHAHLDHIGALPIYQIGSLNTKVYGTVATRIITETMLKDFLKLSGAKIPYEWVEVRKTMDNFMAIGYGEEVEIDSLKVSLYNAGHIPGSSIIKVSSEKGVIAFTGDINLTETKLMKPAEIENIGDANVLVMESTYGKFNHPNRKDVENDFYDKVMEVVESGGTVLVPAFSLARSQEVLSVLAERNFPYPVYYDGMSREITEIMLGFKEFLNRPDLLKKAYDNFNYVKGWEDRHRAWKEKGVIVASAGMLKGGPAVYYFKKLSENSKNAVFLVSYQAINTPGRKLLEMGKFDEYSGLLKARLEIFDFSSHAGRRQLLEIVKSVKDLEKVVLVHGSPDNESSLADLIKQEIGVEVITPENGQEISL.

H130, H132, D134, H135, H213, D234, and H460 together coordinate a divalent metal cation.

Belongs to the metallo-beta-lactamase superfamily. RNA-metabolizing metallo-beta-lactamase-like family. Mg(2+) is required as a cofactor.

In terms of biological role, a 5'-3' exoribonuclease, more active on 5'-monophosphorylated and 5'-hydroxylated RNA than 5'-tri-phosphorylated RNA; note there is no evidence for accumulation of 5'-monophosphorylated RNA in this organism. Translation initiation factor 2 subunit gamma but not subunit alpha protects 5'-tri-phosphorylated RNA from degradation by this enzyme. This chain is RNase aCSPSF2, found in Saccharolobus solfataricus (strain ATCC 35092 / DSM 1617 / JCM 11322 / P2) (Sulfolobus solfataricus).